The chain runs to 311 residues: Methionyl-tRNA formyltransferase (311 aa).

Residue 110 to 113 (SLLP) coordinates (6S)-5,6,7,8-tetrahydrofolate.

The protein belongs to the Fmt family.

It carries out the reaction L-methionyl-tRNA(fMet) + (6R)-10-formyltetrahydrofolate = N-formyl-L-methionyl-tRNA(fMet) + (6S)-5,6,7,8-tetrahydrofolate + H(+). In terms of biological role, attaches a formyl group to the free amino group of methionyl-tRNA(fMet). The formyl group appears to play a dual role in the initiator identity of N-formylmethionyl-tRNA by promoting its recognition by IF2 and preventing the misappropriation of this tRNA by the elongation apparatus. The polypeptide is Methionyl-tRNA formyltransferase (Streptococcus thermophilus (strain ATCC BAA-250 / LMG 18311)).